A 527-amino-acid chain; its full sequence is Peptide chain release factor 3 (527 aa).

The tr-type G domain maps to 9–277 (AKRRTFAIIS…AVVDWAPLPL (269 aa)). Residues 18–25 (SHPDAGKT), 86–90 (DTPGH), and 140–143 (NKLD) each bind GTP.

It belongs to the TRAFAC class translation factor GTPase superfamily. Classic translation factor GTPase family. PrfC subfamily.

It localises to the cytoplasm. Its function is as follows. Increases the formation of ribosomal termination complexes and stimulates activities of RF-1 and RF-2. It binds guanine nucleotides and has strong preference for UGA stop codons. It may interact directly with the ribosome. The stimulation of RF-1 and RF-2 is significantly reduced by GTP and GDP, but not by GMP. In Pseudomonas fluorescens (strain ATCC BAA-477 / NRRL B-23932 / Pf-5), this protein is Peptide chain release factor 3.